An 82-amino-acid polypeptide reads, in one-letter code: Small ribosomal subunit protein bS18 (82 aa).

Belongs to the bacterial ribosomal protein bS18 family. Part of the 30S ribosomal subunit. Forms a tight heterodimer with protein bS6.

Its function is as follows. Binds as a heterodimer with protein bS6 to the central domain of the 16S rRNA, where it helps stabilize the platform of the 30S subunit. The chain is Small ribosomal subunit protein bS18 from Bifidobacterium longum (strain NCC 2705).